The chain runs to 242 residues: Phosphoribosylaminoimidazole-succinocarboxamide synthase (242 aa).

This sequence belongs to the SAICAR synthetase family.

The enzyme catalyses 5-amino-1-(5-phospho-D-ribosyl)imidazole-4-carboxylate + L-aspartate + ATP = (2S)-2-[5-amino-1-(5-phospho-beta-D-ribosyl)imidazole-4-carboxamido]succinate + ADP + phosphate + 2 H(+). It functions in the pathway purine metabolism; IMP biosynthesis via de novo pathway; 5-amino-1-(5-phospho-D-ribosyl)imidazole-4-carboxamide from 5-amino-1-(5-phospho-D-ribosyl)imidazole-4-carboxylate: step 1/2. The chain is Phosphoribosylaminoimidazole-succinocarboxamide synthase from Ehrlichia chaffeensis (strain ATCC CRL-10679 / Arkansas).